Here is a 180-residue protein sequence, read N- to C-terminus: Endoribonuclease YbeY (180 aa).

Residues histidine 149, histidine 153, and histidine 159 each contribute to the Zn(2+) site.

The protein belongs to the endoribonuclease YbeY family. Zn(2+) serves as cofactor.

The protein resides in the cytoplasm. Single strand-specific metallo-endoribonuclease involved in late-stage 70S ribosome quality control and in maturation of the 3' terminus of the 16S rRNA. In Prochlorococcus marinus (strain MIT 9515), this protein is Endoribonuclease YbeY.